We begin with the raw amino-acid sequence, 20 residues long: L-amino-acid oxidase L2 (20 aa).

Belongs to the flavin monoamine oxidase family. FIG1 subfamily. Monomer. This is in contrast with most of its orthologs, that are non-covalently linked homodimers. Requires FAD as cofactor. Post-translationally, N-glycosylated. As to expression, expressed by the venom gland.

The protein localises to the secreted. It catalyses the reaction an L-alpha-amino acid + O2 + H2O = a 2-oxocarboxylate + H2O2 + NH4(+). The catalysed reaction is L-leucine + O2 + H2O = 4-methyl-2-oxopentanoate + H2O2 + NH4(+). The enzyme catalyses L-phenylalanine + O2 + H2O = 3-phenylpyruvate + H2O2 + NH4(+). It carries out the reaction L-tryptophan + O2 + H2O = indole-3-pyruvate + H2O2 + NH4(+). It catalyses the reaction L-methionine + O2 + H2O = 4-methylsulfanyl-2-oxobutanoate + H2O2 + NH4(+). The catalysed reaction is L-isoleucine + O2 + H2O = (S)-3-methyl-2-oxopentanoate + H2O2 + NH4(+). The enzyme catalyses L-tyrosine + O2 + H2O = 3-(4-hydroxyphenyl)pyruvate + H2O2 + NH4(+). Functionally, catalyzes an oxidative deamination of predominantly hydrophobic and aromatic L-amino acids, thus producing hydrogen peroxide that may contribute to the diverse toxic effects of this enzyme. Is active on L-Ile, L-Leu, L-Met, L-Phe, L-Trp, and L-Tyr. Exhibits diverse biological activities, such as hemorrhage, hemolysis, edema, apoptosis of vascular endothelial cells or tumor cell lines, antibacterial and antiparasitic activities, as well as regulation of platelet aggregation. Its effect on platelets is controversial, since it either induces aggregation or inhibits agonist-induced aggregation. These different effects are probably due to different experimental conditions. The sequence is that of L-amino-acid oxidase L2 from Daboia russelii (Russel's viper).